A 546-amino-acid chain; its full sequence is Chaperonin GroEL 2 (546 aa).

Residues 30-33, Lys-51, 87-91, Gly-415, 479-481, and Asp-495 each bind ATP; these read TLGP, DGTTT, and NAA.

The protein belongs to the chaperonin (HSP60) family. In terms of assembly, forms a cylinder of 14 subunits composed of two heptameric rings stacked back-to-back. Interacts with the co-chaperonin GroES.

The protein resides in the cytoplasm. It carries out the reaction ATP + H2O + a folded polypeptide = ADP + phosphate + an unfolded polypeptide.. In terms of biological role, together with its co-chaperonin GroES, plays an essential role in assisting protein folding. The GroEL-GroES system forms a nano-cage that allows encapsulation of the non-native substrate proteins and provides a physical environment optimized to promote and accelerate protein folding. This chain is Chaperonin GroEL 2, found in Chromobacterium violaceum (strain ATCC 12472 / DSM 30191 / JCM 1249 / CCUG 213 / NBRC 12614 / NCIMB 9131 / NCTC 9757 / MK).